Here is a 392-residue protein sequence, read N- to C-terminus: S-adenosylmethionine synthase (392 aa).

His17 provides a ligand contact to ATP. Mg(2+) is bound at residue Asp19. Glu45 is a K(+) binding site. Residues Glu58 and Gln102 each coordinate L-methionine. The segment at 102–112 (QSADIAQGVDA) is flexible loop. Residues 169 to 171 (DAK), 235 to 236 (KF), Asp244, 250 to 251 (RK), Ala267, and Lys271 contribute to the ATP site. An L-methionine-binding site is contributed by Asp244. An L-methionine-binding site is contributed by Lys275.

Belongs to the AdoMet synthase family. In terms of assembly, homotetramer; dimer of dimers. The cofactor is Mg(2+). K(+) is required as a cofactor.

The protein localises to the cytoplasm. The catalysed reaction is L-methionine + ATP + H2O = S-adenosyl-L-methionine + phosphate + diphosphate. Its pathway is amino-acid biosynthesis; S-adenosyl-L-methionine biosynthesis; S-adenosyl-L-methionine from L-methionine: step 1/1. In terms of biological role, catalyzes the formation of S-adenosylmethionine (AdoMet) from methionine and ATP. The overall synthetic reaction is composed of two sequential steps, AdoMet formation and the subsequent tripolyphosphate hydrolysis which occurs prior to release of AdoMet from the enzyme. This is S-adenosylmethionine synthase from Methylobacterium radiotolerans (strain ATCC 27329 / DSM 1819 / JCM 2831 / NBRC 15690 / NCIMB 10815 / 0-1).